We begin with the raw amino-acid sequence, 445 residues long: C-terminal-binding protein 2 (445 aa).

Arg-22 is modified (asymmetric dimethylarginine). NAD(+) is bound by residues Ser-106, 186-191 (IGFGRT), Asp-210, 243-249 (CNLNEHN), 270-272 (AAR), and Asp-296. Residue Arg-272 is part of the active site. Residue Glu-301 is part of the active site. His-321 serves as the catalytic Proton donor. 321–324 (HTAW) contributes to the NAD(+) binding site. The disordered stretch occupies residues 414 to 445 (THNLPTVAHPSQAPSPNQPTKHGDNREHPNEQ). Ser-428 is subject to Phosphoserine. The segment covering 434 to 445 (KHGDNREHPNEQ) has biased composition (basic and acidic residues).

This sequence belongs to the D-isomer specific 2-hydroxyacid dehydrogenase family. In terms of assembly, interacts with the C-terminus of adenovirus E1A protein. Can form homodimers or heterodimers of CTBP1 and CTBP2. Interacts with HIPK2. Interacts with ZNF217, PNN, NRIP1 and WIZ. Interacts with PRDM16; represses white adipose tissue (WAT)-specific genes expression. Interacts with MCRIP1. Isoform 2 is specifically localized in synaptic ribbon (at protein level).

The protein resides in the nucleus. It localises to the synapse. In terms of biological role, corepressor targeting diverse transcription regulators. Functions in brown adipose tissue (BAT) differentiation. Isoform 2 probably acts as a scaffold for specialized synapses. The chain is C-terminal-binding protein 2 (CTBP2) from Bos taurus (Bovine).